The sequence spans 227 residues: PKHD-type hydroxylase Mnod_1077 (227 aa).

Residues 78 to 178 (RVLPPLFNRY…RWSAFFWSQS (101 aa)) form the Fe2OG dioxygenase domain. 3 residues coordinate Fe cation: H96, D98, and H159. R169 is a binding site for 2-oxoglutarate.

Fe(2+) is required as a cofactor. L-ascorbate serves as cofactor.

The chain is PKHD-type hydroxylase Mnod_1077 from Methylobacterium nodulans (strain LMG 21967 / CNCM I-2342 / ORS 2060).